The chain runs to 104 residues: Circadian clock oscillator protein KaiB (104 aa).

It belongs to the KaiB family. The KaiABC complex composition changes during the circadian cycle to control KaiC phosphorylation. Complexes KaiC(6), KaiA(2-4):KaiC(6), KaiB(6):KaiC(6) and KaiC(6):KaiB(6):KaiA(12) are among the most important forms, many form cooperatively. Undergoes a major conformational rearrangment; in the free state forms homotetramers as a dimer of dimers. When bound to the CI domain of KaiC switches to a monomeric thioredoxin-fold (KaiB(fs)). KaiB(fs) binds CikA, leading it to dephosphorylate phospho-RpaA.

Its function is as follows. Key component of the KaiABC oscillator complex, which constitutes the main circadian regulator in cyanobacteria. Complex composition changes during the circadian cycle to control KaiC phosphorylation. KaiA stimulates KaiC autophosphorylation, while KaiB sequesters KaiA, leading to KaiC autodephosphorylation. Phospho-Ser-431 KaiC accumulation triggers binding of KaiB to form the KaiB(6):KaiC(6) complex, leading to changes in output regulators CikA and SasA. KaiB switches to a thioredoxin-like fold (KaiB(fs)) when bound to KaiC. KaiB(6):KaiC(6) formation exposes a site for KaiA binding that sequesters KaiA from KaiC, making the KaiC(6):KaiB(6):KaiA(12) complex that results in KaiC autodephosphorylation. Functionally, a metamorphic protein which reversibly switches between an inactive tetrameric fold and a rare, thioredoxin-like monomeric fold (KaiB(fs)). KaiB(fs) binds phospho-KaiC, KaiA and CikA. KaiA and CikA compete for binding to KaiB(fs), and KaiB(fs) and SasA compete for binding to KaiC, thus the clock oscillator and output signal pathway are tightly coupled. This is Circadian clock oscillator protein KaiB from Nostoc punctiforme (strain ATCC 29133 / PCC 73102).